We begin with the raw amino-acid sequence, 149 residues long: METLFRLPFAVLECPNIKLKRPGWVHMPSAMTVYALVVVSYFLITGGIIYDVIVEPPSVGSMTDEHGHQRPVAFLAYRVNGQYIMEGLASSFLFTMGGLGFIILDRSNAPNIPKLNRFLLLFIGFVSVLLSFFMARVFMRMKLPGYLMG.

Residues 1 to 32 (METLFRLPFAVLECPNIKLKRPGWVHMPSAMT) lie on the Cytoplasmic side of the membrane. The helical transmembrane segment at 33 to 53 (VYALVVVSYFLITGGIIYDVI) threads the bilayer. The Extracellular portion of the chain corresponds to 54–83 (VEPPSVGSMTDEHGHQRPVAFLAYRVNGQY). Residues 84 to 104 (IMEGLASSFLFTMGGLGFIIL) traverse the membrane as a helical segment. Residues 105 to 117 (DRSNAPNIPKLNR) lie on the Cytoplasmic side of the membrane. Residues 118 to 138 (FLLLFIGFVSVLLSFFMARVF) traverse the membrane as a helical segment. Residues 139-149 (MRMKLPGYLMG) lie on the Extracellular side of the membrane.

Belongs to the OSTC family. As to quaternary structure, specific component of the STT3A-containing form of the oligosaccharyltransferase (OST) complex.

It localises to the membrane. The protein operates within protein modification; protein glycosylation. Specific component of the STT3A-containing form of the oligosaccharyl transferase (OST) complex that catalyzes the initial transfer of a defined glycan (Glc(3)Man(9)GlcNAc(2) in eukaryotes) from the lipid carrier dolichol-pyrophosphate to an asparagine residue within an Asn-X-Ser/Thr consensus motif in nascent polypeptide chains, the first step in protein N-glycosylation. N-glycosylation occurs cotranslationally and the complex associates with the Sec61 complex at the channel-forming translocon complex that mediates protein translocation across the endoplasmic reticulum (ER). All subunits are required for a maximal enzyme activity. This chain is Oligosaccharyltransferase complex subunit OSTC, found in Gallus gallus (Chicken).